The sequence spans 393 residues: Protein TsgA (393 aa).

12 consecutive transmembrane segments (helical) span residues 11 to 31 (WISF…GMVM), 51 to 71 (FLNA…EIIP), 78 to 98 (FGFI…SLAL), 101 to 121 (AAMF…TFLI), 134 to 154 (LLFT…VAAF), 162 to 182 (WYWV…LTFG), 206 to 226 (IGVL…LGFI), 245 to 265 (ALVS…SFIL), 273 to 293 (ILTV…TGTQ), 298 to 318 (WFIL…ITLG), 332 to 352 (FILT…GPIV), and 361 to 381 (LLTA…LGFV).

The protein belongs to the major facilitator superfamily. TsgA family.

It localises to the cell inner membrane. The polypeptide is Protein TsgA (Salmonella agona (strain SL483)).